Here is a 442-residue protein sequence, read N- to C-terminus: C4-dicarboxylate transport protein (442 aa).

9 helical membrane passes run 13–33 (VLYFQVLTAVVIGVLLGHFYP), 49–69 (GIKMLIAPIIFCTVVLGIAGM), 81–101 (LALLYFEIVSTIALMVGLVVV), 149–169 (AFAKGEILQVLFIAILFGFAL), 193–213 (MIAIIMKFAPIGAFGAMAFTI), 227–247 (LMGSFYLTCLLFVFIVLGIIA), 312–332 (IYLTMAAVFIAQATNTPMTLL), 336–356 (TLLAVLLLTSKGAAGVTGSGF), and 357–377 (IVLAATLSAVGDVPVAGLAII).

It belongs to the dicarboxylate/amino acid:cation symporter (DAACS) (TC 2.A.23) family.

It localises to the cell membrane. Its function is as follows. Responsible for the transport of dicarboxylates such as succinate, fumarate, and malate across the membrane. In Polynucleobacter asymbioticus (strain DSM 18221 / CIP 109841 / QLW-P1DMWA-1) (Polynucleobacter necessarius subsp. asymbioticus), this protein is C4-dicarboxylate transport protein.